A 589-amino-acid polypeptide reads, in one-letter code: Actin-histidine N-methyltransferase (589 aa).

The segment at 1–22 (MGKKSRVKTQKSGTGATATVSP) is disordered. Positions 10–20 (QKSGTGATATV) are enriched in polar residues. S-adenosyl-L-methionine is bound by residues R75, 104–106 (EGF), R254, 275–279 (DMCNH), and 325–327 (SGF). The SET domain maps to 94–314 (EGFEMVNFKE…AGEQIYIFYG (221 aa)). S513 is subject to Phosphoserine. A disordered region spans residues 547 to 589 (LVNGERSFPNGTRSEEDLKQEERKRAKGDAKESSSDSTDAVKE). Residues 559–589 (RSEEDLKQEERKRAKGDAKESSSDSTDAVKE) are compositionally biased toward basic and acidic residues.

This sequence belongs to the class V-like SAM-binding methyltransferase superfamily. SETD3 actin-histidine methyltransferase family. In terms of assembly, interacts with MYOD1. Phosphorylated by GSK3B, which is required for recognition by the SCF(FBXW7) complex and subsequent degradation. In terms of processing, ubiquitinated by the SCF(FBXW7) complex following phosphorylation by GSK3B, leading to its degradation by the proteasome.

The protein localises to the cytoplasm. It is found in the nucleus. It carries out the reaction L-histidyl-[protein] + S-adenosyl-L-methionine = N(tele)-methyl-L-histidyl-[protein] + S-adenosyl-L-homocysteine + H(+). Functionally, protein-histidine N-methyltransferase that specifically mediates 3-methylhistidine (tele-methylhistidine) methylation of actin at 'His-73'. Histidine methylation of actin is required for smooth muscle contraction of the laboring uterus during delivery. Does not have protein-lysine N-methyltransferase activity and probably only catalyzes histidine methylation of actin. The sequence is that of Actin-histidine N-methyltransferase from Dasypus novemcinctus (Nine-banded armadillo).